A 123-amino-acid chain; its full sequence is MAISKEDILEAVGSLTVMELNDLVKAFEEKFGVSAAAVAVAGPAGAGAAAAEEQTEFTVMLTGAGDKKVEVIKVVRAATGLGLKEAKDLVDGAPKAVKEGVSKADAEALKAQLEAAGAKVEVK.

This sequence belongs to the bacterial ribosomal protein bL12 family. As to quaternary structure, homodimer. Part of the ribosomal stalk of the 50S ribosomal subunit. Forms a multimeric L10(L12)X complex, where L10 forms an elongated spine to which 2 to 4 L12 dimers bind in a sequential fashion. Binds GTP-bound translation factors.

Its function is as follows. Forms part of the ribosomal stalk which helps the ribosome interact with GTP-bound translation factors. Is thus essential for accurate translation. This Dechloromonas aromatica (strain RCB) protein is Large ribosomal subunit protein bL12.